A 197-amino-acid polypeptide reads, in one-letter code: RNA polymerase II subunit A C-terminal domain phosphatase ssup-72 (197 aa).

Serine 39 carries the post-translational modification Phosphoserine.

The protein belongs to the SSU72 phosphatase family. In terms of assembly, may interact with synd-1 (via C-terminus); the interaction may prevent ssup-72 binding to RNA polymerase II ama-1. May interact with RNA polymerase II ama-1. May be phosphorylated by kin-20. In terms of tissue distribution, expressed in epidermis, intestine and nervous system.

It localises to the nucleus. It carries out the reaction O-phospho-L-seryl-[protein] + H2O = L-seryl-[protein] + phosphate. It catalyses the reaction O-phospho-L-threonyl-[protein] + H2O = L-threonyl-[protein] + phosphate. Functionally, protein phosphatase that dephosphorylates 'Ser-5' of the heptad repeats YSPTSPS in the C-terminal domain of the large RNA polymerase II subunit ama-1. By regulating the phosphorylation status of ama-1 and thus ama-1 binding to specific polyadenylation sites, regulates alternative polyadenylation of pre-mRNAs, including unc-44 and dlk-1 mRNAs. This results in the tissue-specific expression of unc-44 isoforms. The sequence is that of RNA polymerase II subunit A C-terminal domain phosphatase ssup-72 from Caenorhabditis elegans.